Reading from the N-terminus, the 443-residue chain is Phenylalanine--tRNA ligase alpha subunit (443 aa).

L-phenylalanine contacts are provided by residues Thr-332, 375 to 377 (QVE), and Tyr-415. A Mg(2+)-binding site is contributed by Glu-417. Phe-441 serves as a coordination point for L-phenylalanine.

The protein belongs to the class-II aminoacyl-tRNA synthetase family. Phe-tRNA synthetase alpha subunit type 2 subfamily. As to quaternary structure, heterotetramer; dimer of two heterodimers formed by FARSA and FARSB. Mg(2+) is required as a cofactor.

The protein resides in the cytoplasm. The enzyme catalyses tRNA(Phe) + L-phenylalanine + ATP = L-phenylalanyl-tRNA(Phe) + AMP + diphosphate + H(+). In Gallus gallus (Chicken), this protein is Phenylalanine--tRNA ligase alpha subunit (FARSA).